Here is a 214-residue protein sequence, read N- to C-terminus: Probable transaldolase (214 aa).

The Schiff-base intermediate with substrate role is filled by lysine 83.

It belongs to the transaldolase family. Type 3B subfamily.

Its subcellular location is the cytoplasm. The catalysed reaction is D-sedoheptulose 7-phosphate + D-glyceraldehyde 3-phosphate = D-erythrose 4-phosphate + beta-D-fructose 6-phosphate. The protein operates within carbohydrate degradation; pentose phosphate pathway; D-glyceraldehyde 3-phosphate and beta-D-fructose 6-phosphate from D-ribose 5-phosphate and D-xylulose 5-phosphate (non-oxidative stage): step 2/3. In terms of biological role, transaldolase is important for the balance of metabolites in the pentose-phosphate pathway. This chain is Probable transaldolase, found in Geobacter sulfurreducens (strain ATCC 51573 / DSM 12127 / PCA).